We begin with the raw amino-acid sequence, 382 residues long: Succinate--CoA ligase [ADP-forming] subunit beta (382 aa).

An ATP-grasp domain is found at 9 to 236 (KEVFADAGIP…DAAEDDLEAK (228 aa)). ATP is bound by residues lysine 45, 52 to 54 (GRG), glutamate 91, valine 94, and glutamate 99. Mg(2+) contacts are provided by asparagine 191 and aspartate 205. Substrate-binding positions include asparagine 256 and 313–315 (GIT).

Belongs to the succinate/malate CoA ligase beta subunit family. Heterotetramer of two alpha and two beta subunits. Mg(2+) serves as cofactor.

It carries out the reaction succinate + ATP + CoA = succinyl-CoA + ADP + phosphate. The catalysed reaction is GTP + succinate + CoA = succinyl-CoA + GDP + phosphate. The protein operates within carbohydrate metabolism; tricarboxylic acid cycle; succinate from succinyl-CoA (ligase route): step 1/1. Functionally, succinyl-CoA synthetase functions in the citric acid cycle (TCA), coupling the hydrolysis of succinyl-CoA to the synthesis of either ATP or GTP and thus represents the only step of substrate-level phosphorylation in the TCA. The beta subunit provides nucleotide specificity of the enzyme and binds the substrate succinate, while the binding sites for coenzyme A and phosphate are found in the alpha subunit. The chain is Succinate--CoA ligase [ADP-forming] subunit beta from Halobacterium salinarum (strain ATCC 29341 / DSM 671 / R1).